We begin with the raw amino-acid sequence, 153 residues long: 3-hydroxyacyl-[acyl-carrier-protein] dehydratase FabZ (153 aa).

His47 is a catalytic residue.

The protein belongs to the thioester dehydratase family. FabZ subfamily.

The protein resides in the cytoplasm. It catalyses the reaction a (3R)-hydroxyacyl-[ACP] = a (2E)-enoyl-[ACP] + H2O. Functionally, involved in unsaturated fatty acids biosynthesis. Catalyzes the dehydration of short chain beta-hydroxyacyl-ACPs and long chain saturated and unsaturated beta-hydroxyacyl-ACPs. The sequence is that of 3-hydroxyacyl-[acyl-carrier-protein] dehydratase FabZ from Dichelobacter nodosus (strain VCS1703A).